Reading from the N-terminus, the 232-residue chain is Phosphate-specific transport system accessory protein PhoU homolog 1 (232 aa).

This sequence belongs to the PhoU family. In terms of assembly, homodimer.

The protein resides in the cytoplasm. In terms of biological role, plays a role in the regulation of phosphate uptake. This chain is Phosphate-specific transport system accessory protein PhoU homolog 1 (phoU1), found in Thermotoga maritima (strain ATCC 43589 / DSM 3109 / JCM 10099 / NBRC 100826 / MSB8).